Reading from the N-terminus, the 72-residue chain is Translation initiation factor IF-1 (72 aa).

Residues methionine 1 to arginine 72 enclose the S1-like domain.

The protein belongs to the IF-1 family. Component of the 30S ribosomal translation pre-initiation complex which assembles on the 30S ribosome in the order IF-2 and IF-3, IF-1 and N-formylmethionyl-tRNA(fMet); mRNA recruitment can occur at any time during PIC assembly.

The protein localises to the cytoplasm. Functionally, one of the essential components for the initiation of protein synthesis. Stabilizes the binding of IF-2 and IF-3 on the 30S subunit to which N-formylmethionyl-tRNA(fMet) subsequently binds. Helps modulate mRNA selection, yielding the 30S pre-initiation complex (PIC). Upon addition of the 50S ribosomal subunit IF-1, IF-2 and IF-3 are released leaving the mature 70S translation initiation complex. This Buchnera aphidicola subsp. Schizaphis graminum (strain Sg) protein is Translation initiation factor IF-1.